Consider the following 151-residue polypeptide: Ubiquitin-conjugating enzyme E2 2 (151 aa).

Residues 1–26 (MSTSARRRLMRDFKRMQTDPPAGVSA) form a disordered region. A UBC core domain is found at 4–150 (SARRRLMRDF…VRETVEKSWE (147 aa)). Cys88 acts as the Glycyl thioester intermediate in catalysis.

The protein belongs to the ubiquitin-conjugating enzyme family.

It localises to the cytoplasm. The protein resides in the nucleus. The enzyme catalyses S-ubiquitinyl-[E1 ubiquitin-activating enzyme]-L-cysteine + [E2 ubiquitin-conjugating enzyme]-L-cysteine = [E1 ubiquitin-activating enzyme]-L-cysteine + S-ubiquitinyl-[E2 ubiquitin-conjugating enzyme]-L-cysteine.. It participates in protein modification; protein ubiquitination. Functionally, catalyzes the covalent attachment of ubiquitin to other proteins. Plays a role in transcription regulation by catalyzing the monoubiquitination of histone H2B to form H2BK123ub1. H2BK123ub1 gives a specific tag for epigenetic transcriptional activation and is also a prerequisite for H3K4me and H3K79me formation. Also involved in postreplication repair of UV-damaged DNA, in N-end rule-dependent protein degradation and in sporulation. The sequence is that of Ubiquitin-conjugating enzyme E2 2 (uvsJ) from Emericella nidulans (strain FGSC A4 / ATCC 38163 / CBS 112.46 / NRRL 194 / M139) (Aspergillus nidulans).